We begin with the raw amino-acid sequence, 205 residues long: NADH dehydrogenase (205 aa).

Residues 17–21, Q73, 158–159, and R195 contribute to the FMN site; these read RRSIR and LG.

Belongs to the nitroreductase family. As to quaternary structure, homodimer. FMN serves as cofactor.

It carries out the reaction a ubiquinone + NADH + 5 H(+)(in) = a ubiquinol + NAD(+) + 4 H(+)(out). Can oxidize either NADH or NADPH with a preference for NADH. Can catalyze electron transfer from NADH to various electron acceptors which include, in addition to molecular oxygen, cytochrome c, 2,6 dichlorphenolindophenol, methylene blue, ferricyanide or P-nitroblue tetrazolium. The sequence is that of NADH dehydrogenase (nox) from Thermus thermophilus (strain ATCC 27634 / DSM 579 / HB8).